A 217-amino-acid polypeptide reads, in one-letter code: Probable GTP-binding protein EngB (217 aa).

The region spanning serine 24–proline 207 is the EngB-type G domain. Residues glycine 32 to serine 39, glycine 59 to histidine 63, aspartate 81 to glycine 84, threonine 148 to aspartate 151, and leucine 185 to alanine 188 each bind GTP. Mg(2+) is bound by residues serine 39 and threonine 61.

This sequence belongs to the TRAFAC class TrmE-Era-EngA-EngB-Septin-like GTPase superfamily. EngB GTPase family. Mg(2+) is required as a cofactor.

Functionally, necessary for normal cell division and for the maintenance of normal septation. This is Probable GTP-binding protein EngB from Paraburkholderia phytofirmans (strain DSM 17436 / LMG 22146 / PsJN) (Burkholderia phytofirmans).